The following is a 317-amino-acid chain: MTCKIIGCGGYLPSKIVSNDELAKFVDTNDAWIRTRTGITQRHIAGDTEYTSHLALESAEKAIADAGISVNDIDLIITCTTTPDNSFPSVASKLQGYLGLTNIPSFDLQAVCAGFVYGLQVANSLISSGKYKTILLIGAEKMTSLLDWNDRTTCVLFGDGAGSVILQRSRDDSGLIDSNIFSSGADYEILYTNGGVSMNGISGKIVMQGQKLFRHAIEKMQQSIKDLLHANQFSVSDIDYFIPHQANIRIINKLAELLNIEEHKVVKTVEKHANCSAASIPLALSTLKASGKIKKGDILLFSAIGAGLTWGSAFIRW.

Catalysis depends on residues cysteine 112 and histidine 244. The ACP-binding stretch occupies residues 245–249; sequence QANIR. Asparagine 274 is a catalytic residue.

The protein belongs to the thiolase-like superfamily. FabH family. Homodimer.

Its subcellular location is the cytoplasm. The catalysed reaction is malonyl-[ACP] + acetyl-CoA + H(+) = 3-oxobutanoyl-[ACP] + CO2 + CoA. It participates in lipid metabolism; fatty acid biosynthesis. Catalyzes the condensation reaction of fatty acid synthesis by the addition to an acyl acceptor of two carbons from malonyl-ACP. Catalyzes the first condensation reaction which initiates fatty acid synthesis and may therefore play a role in governing the total rate of fatty acid production. Possesses both acetoacetyl-ACP synthase and acetyl transacylase activities. Its substrate specificity determines the biosynthesis of branched-chain and/or straight-chain of fatty acids. The sequence is that of Beta-ketoacyl-[acyl-carrier-protein] synthase III from Rickettsia massiliae (strain Mtu5).